The following is a 208-amino-acid chain: 3-demethoxyubiquinol 3-hydroxylase (208 aa).

Fe cation-binding residues include Glu-57, Glu-87, His-90, Glu-139, Glu-171, and His-174.

The protein belongs to the COQ7 family. Fe cation is required as a cofactor.

The protein resides in the cell membrane. It carries out the reaction a 5-methoxy-2-methyl-3-(all-trans-polyprenyl)benzene-1,4-diol + AH2 + O2 = a 3-demethylubiquinol + A + H2O. It participates in cofactor biosynthesis; ubiquinone biosynthesis. In terms of biological role, catalyzes the hydroxylation of 2-nonaprenyl-3-methyl-6-methoxy-1,4-benzoquinol during ubiquinone biosynthesis. This chain is 3-demethoxyubiquinol 3-hydroxylase, found in Herbaspirillum seropedicae.